Consider the following 214-residue polypeptide: Pyridoxine/pyridoxamine 5'-phosphate oxidase (214 aa).

Substrate-binding positions include 8 to 11 (RINY) and Lys-66. Residues 61-66 (RILLIK), 76-77 (FT), Arg-82, Lys-83, and Gln-105 contribute to the FMN site. Substrate is bound by residues Tyr-123, Arg-127, and Ser-131. FMN contacts are provided by residues 140 to 141 (QS) and Trp-184. Substrate is bound at residue 190-192 (RLH). Arg-194 contacts FMN.

It belongs to the pyridoxamine 5'-phosphate oxidase family. Homodimer. The cofactor is FMN.

The enzyme catalyses pyridoxamine 5'-phosphate + O2 + H2O = pyridoxal 5'-phosphate + H2O2 + NH4(+). It carries out the reaction pyridoxine 5'-phosphate + O2 = pyridoxal 5'-phosphate + H2O2. Its pathway is cofactor metabolism; pyridoxal 5'-phosphate salvage; pyridoxal 5'-phosphate from pyridoxamine 5'-phosphate: step 1/1. It functions in the pathway cofactor metabolism; pyridoxal 5'-phosphate salvage; pyridoxal 5'-phosphate from pyridoxine 5'-phosphate: step 1/1. Functionally, catalyzes the oxidation of either pyridoxine 5'-phosphate (PNP) or pyridoxamine 5'-phosphate (PMP) into pyridoxal 5'-phosphate (PLP). This is Pyridoxine/pyridoxamine 5'-phosphate oxidase from Burkholderia vietnamiensis (strain G4 / LMG 22486) (Burkholderia cepacia (strain R1808)).